We begin with the raw amino-acid sequence, 78 residues long: Large ribosomal subunit protein bL28 (78 aa).

The protein belongs to the bacterial ribosomal protein bL28 family.

In Pectobacterium carotovorum subsp. carotovorum (strain PC1), this protein is Large ribosomal subunit protein bL28.